The sequence spans 374 residues: Severin (374 aa).

3 Gelsolin-like repeats span residues 58–109 (FTLE…DEYG), 180–220 (EGKT…KCSA), and 278–369 (EVIK…SFLK).

The protein belongs to the villin/gelsolin family.

In terms of biological role, severin blocks the ends of F-actin and causes the fragmentation and depolymerization of actin filaments. This severin binds stably with actin both in a Ca(2+) dependent and a Ca(2+) independent manner. The chain is Severin (AG8) from Echinococcus granulosus (Hydatid tapeworm).